Consider the following 529-residue polypeptide: Bifunctional purine biosynthesis protein PurH (529 aa).

One can recognise an MGS-like domain in the interval 1 to 148 (MQQPRPIRRA…KNHKDVAIVV (148 aa)).

The protein belongs to the PurH family.

It catalyses the reaction (6R)-10-formyltetrahydrofolate + 5-amino-1-(5-phospho-beta-D-ribosyl)imidazole-4-carboxamide = 5-formamido-1-(5-phospho-D-ribosyl)imidazole-4-carboxamide + (6S)-5,6,7,8-tetrahydrofolate. The catalysed reaction is IMP + H2O = 5-formamido-1-(5-phospho-D-ribosyl)imidazole-4-carboxamide. Its pathway is purine metabolism; IMP biosynthesis via de novo pathway; 5-formamido-1-(5-phospho-D-ribosyl)imidazole-4-carboxamide from 5-amino-1-(5-phospho-D-ribosyl)imidazole-4-carboxamide (10-formyl THF route): step 1/1. It functions in the pathway purine metabolism; IMP biosynthesis via de novo pathway; IMP from 5-formamido-1-(5-phospho-D-ribosyl)imidazole-4-carboxamide: step 1/1. This chain is Bifunctional purine biosynthesis protein PurH, found in Serratia proteamaculans (strain 568).